The chain runs to 647 residues: Threonine--tRNA ligase (647 aa).

The region spanning 1–61 (MIKITFPDGA…EEDGSIEIVT (61 aa)) is the TGS domain. The interval 240–538 (DHRKLGKELD…LIETYKGAFP (299 aa)) is catalytic. Residues Cys-334, His-385, and His-515 each coordinate Zn(2+).

It belongs to the class-II aminoacyl-tRNA synthetase family. As to quaternary structure, homodimer. Zn(2+) is required as a cofactor.

It localises to the cytoplasm. The enzyme catalyses tRNA(Thr) + L-threonine + ATP = L-threonyl-tRNA(Thr) + AMP + diphosphate + H(+). Functionally, catalyzes the attachment of threonine to tRNA(Thr) in a two-step reaction: L-threonine is first activated by ATP to form Thr-AMP and then transferred to the acceptor end of tRNA(Thr). Also edits incorrectly charged L-seryl-tRNA(Thr). This Streptococcus pyogenes serotype M1 protein is Threonine--tRNA ligase.